The sequence spans 660 residues: Junctophilin-1 (660 aa).

Topologically, residues 1–638 (MTGGRFDFDD…EKEANSGPNS (638 aa)) are cytoplasmic. 5 MORN repeats span residues 14–36 (YCGGWEEGKAHGHGICTGPKGQG), 38–59 (YSGSWSHGFEVVGVYTWPSGNT), 60–82 (YQGYWAQGKRHGLGVETKGKWMY), 106–128 (YEGTWSNGLQDGYGVETYGDGGT), and 129–151 (YQGQWAGGMRHGYGVRQSVPYGM). Residues serine 157, serine 216, and serine 220 each carry the phosphoserine modification. Residues 228-247 (SKSSISSKRSSVRSDAAMSR) are disordered. MORN repeat units follow at residues 281–303 (YMGEWKNDKRNGFGISERSNGMK) and 304–326 (YEGEWANNKRHGYGCTVFPDGSK). Over residues 437–454 (NPEEKVLEKPPSPKESPH) the composition is skewed to basic and acidic residues. The segment at 437–631 (NPEEKVLEKP…NDTCPSLEKE (195 aa)) is disordered. Residue serine 452 is modified to Phosphoserine. A Phosphothreonine modification is found at threonine 461. Serine 465, serine 469, and serine 475 each carry phosphoserine. The segment covering 466 to 477 (PESSPKQSHSPQ) has biased composition (low complexity). 2 stretches are compositionally biased toward basic and acidic residues: residues 562–571 (PPEDREDDRG) and 598–612 (VAKESKTEPKAKKSE). The helical; Anchor for type IV membrane protein transmembrane segment at 639–659 (IMIVLVMLLNIGLAILFVHFL) threads the bilayer.

The protein belongs to the junctophilin family. As to expression, specifically expressed in skeletal muscle. Weakly expressed in embryos and neonates. Abundant in young adult muscles.

The protein localises to the cell membrane. It localises to the endoplasmic reticulum membrane. It is found in the sarcoplasmic reticulum membrane. Junctophilins contribute to the formation of junctional membrane complexes (JMCs) which link the plasma membrane with the endoplasmic or sarcoplasmic reticulum in excitable cells. Provides a structural foundation for functional cross-talk between the cell surface and intracellular calcium release channels. JPH1 contributes to the construction of the skeletal muscle triad by linking the t-tubule (transverse-tubule) and SR (sarcoplasmic reticulum) membranes. The polypeptide is Junctophilin-1 (Jph1) (Mus musculus (Mouse)).